The sequence spans 136 residues: Organic hydroperoxide resistance protein OhrB (136 aa).

The protein belongs to the OsmC/Ohr family.

Involved in organic hydroperoxide resistance. The chain is Organic hydroperoxide resistance protein OhrB (ohrB) from Bacillus subtilis (strain 168).